A 586-amino-acid chain; its full sequence is Dual specificity tyrosine-phosphorylation-regulated kinase 3 (586 aa).

Residues 1-13 (MGGAARDRGRKDA) are compositionally biased toward basic and acidic residues. The interval 1 to 187 (MGGAARDRGR…QGVIGGPNNG (187 aa)) is disordered. Residues 208-521 (YEVLKIIGKG…PAQALRHPWI (314 aa)) enclose the Protein kinase domain. Residues 214–222 (IGKGSFGQV), Lys-237, and 287–290 (FELL) contribute to the ATP site. The active-site Proton acceptor is Asp-334. At Tyr-368 the chain carries Phosphotyrosine. The short motif at 467-480 (RSRRGKKRGPPGSK) is the Nuclear localization signal element.

This sequence belongs to the protein kinase superfamily. CMGC Ser/Thr protein kinase family. MNB/DYRK subfamily. In terms of assembly, interacts with SIRT1. Mg(2+) is required as a cofactor. In terms of processing, ubiquitinated at anaphase by the anaphase-promoting complex (APC/C), leading to its degradation by the proteasome. Protein kinase activity is activated following autophosphorylation at Tyr-368.

It localises to the nucleus. The protein resides in the cytoplasm. It is found in the nucleus speckle. Its subcellular location is the cytoplasmic granule. The protein localises to the cytoskeleton. It localises to the microtubule organizing center. The protein resides in the centrosome. The catalysed reaction is L-seryl-[protein] + ATP = O-phospho-L-seryl-[protein] + ADP + H(+). The enzyme catalyses L-threonyl-[protein] + ATP = O-phospho-L-threonyl-[protein] + ADP + H(+). It carries out the reaction L-tyrosyl-[protein] + ATP = O-phospho-L-tyrosyl-[protein] + ADP + H(+). Protein kinase activity is activated following autophosphorylation at Tyr-368. Functionally, dual-specificity protein kinase that promotes disassembly of several types of membraneless organelles during mitosis, such as stress granules, nuclear speckles and pericentriolar material. Dual-specificity tyrosine-regulated kinases (DYRKs) autophosphorylate a critical tyrosine residue in their activation loop and phosphorylate their substrate on serine and threonine residues. Acts as a central dissolvase of membraneless organelles during the G2-to-M transition, after the nuclear-envelope breakdown: acts by mediating phosphorylation of multiple serine and threonine residues in unstructured domains of proteins, such as SRRM1 and PCM1. Does not mediate disassembly of all membraneless organelles: disassembly of P-body and nucleolus is not regulated by DYRK3. Dissolution of membraneless organelles at the onset of mitosis is also required to release mitotic regulators, such as ZNF207, from liquid-unmixed organelles where they are sequestered and keep them dissolved during mitosis. Regulates mTORC1 by mediating the dissolution of stress granules: during stressful conditions, DYRK3 partitions from the cytosol to the stress granule, together with mTORC1 components, which prevents mTORC1 signaling. When stress signals are gone, the kinase activity of DYRK3 is required for the dissolution of stress granule and mTORC1 relocation to the cytosol: acts by mediating the phosphorylation of the mTORC1 inhibitor AKT1S1, allowing full reactivation of mTORC1 signaling. Also acts as a negative regulator of EPO-dependent erythropoiesis: may place an upper limit on red cell production during stress erythropoiesis. Inhibits cell death due to cytokine withdrawal in hematopoietic progenitor cells. Promotes cell survival upon genotoxic stress through phosphorylation of SIRT1: this in turn inhibits p53/TP53 activity and apoptosis. This chain is Dual specificity tyrosine-phosphorylation-regulated kinase 3, found in Mus musculus (Mouse).